A 322-amino-acid polypeptide reads, in one-letter code: 4-hydroxy-3-methylbut-2-enyl diphosphate reductase (322 aa).

C12 serves as a coordination point for [4Fe-4S] cluster. Positions 43 and 81 each coordinate (2E)-4-hydroxy-3-methylbut-2-enyl diphosphate. Residues H43 and H81 each contribute to the dimethylallyl diphosphate site. Isopentenyl diphosphate-binding residues include H43 and H81. [4Fe-4S] cluster is bound at residue C103. H131 is a binding site for (2E)-4-hydroxy-3-methylbut-2-enyl diphosphate. Residue H131 participates in dimethylallyl diphosphate binding. H131 contacts isopentenyl diphosphate. The active-site Proton donor is the E133. (2E)-4-hydroxy-3-methylbut-2-enyl diphosphate is bound at residue T172. C200 contacts [4Fe-4S] cluster. Residues S228, N230, and S273 each coordinate (2E)-4-hydroxy-3-methylbut-2-enyl diphosphate. 3 residues coordinate dimethylallyl diphosphate: S228, N230, and S273. Isopentenyl diphosphate contacts are provided by S228, N230, and S273.

It belongs to the IspH family. [4Fe-4S] cluster serves as cofactor.

It catalyses the reaction isopentenyl diphosphate + 2 oxidized [2Fe-2S]-[ferredoxin] + H2O = (2E)-4-hydroxy-3-methylbut-2-enyl diphosphate + 2 reduced [2Fe-2S]-[ferredoxin] + 2 H(+). The enzyme catalyses dimethylallyl diphosphate + 2 oxidized [2Fe-2S]-[ferredoxin] + H2O = (2E)-4-hydroxy-3-methylbut-2-enyl diphosphate + 2 reduced [2Fe-2S]-[ferredoxin] + 2 H(+). The protein operates within isoprenoid biosynthesis; dimethylallyl diphosphate biosynthesis; dimethylallyl diphosphate from (2E)-4-hydroxy-3-methylbutenyl diphosphate: step 1/1. Its pathway is isoprenoid biosynthesis; isopentenyl diphosphate biosynthesis via DXP pathway; isopentenyl diphosphate from 1-deoxy-D-xylulose 5-phosphate: step 6/6. Catalyzes the conversion of 1-hydroxy-2-methyl-2-(E)-butenyl 4-diphosphate (HMBPP) into a mixture of isopentenyl diphosphate (IPP) and dimethylallyl diphosphate (DMAPP). Acts in the terminal step of the DOXP/MEP pathway for isoprenoid precursor biosynthesis. In Macrococcus caseolyticus (strain JCSC5402) (Macrococcoides caseolyticum), this protein is 4-hydroxy-3-methylbut-2-enyl diphosphate reductase.